Here is a 380-residue protein sequence, read N- to C-terminus: Two-component response regulator ORR28 (380 aa).

The 118-residue stretch at serine 13–aspartate 130 folds into the Response regulatory domain. Position 65 is a 4-aspartylphosphate (aspartate 65). Residues arginine 169–lysine 223 constitute a DNA-binding region (myb-like GARP). Residues leucine 225 to asparagine 245 are disordered. Over residues alanine 228–asparagine 245 the composition is skewed to polar residues.

This sequence belongs to the ARR family. Type-B subfamily. In terms of processing, two-component system major event consists of a His-to-Asp phosphorelay between a sensor histidine kinase (HK) and a response regulator (RR). In plants, the His-to-Asp phosphorelay involves an additional intermediate named Histidine-containing phosphotransfer protein (HPt). This multistep phosphorelay consists of a His-Asp-His-Asp sequential transfer of a phosphate group between first a His and an Asp of the HK protein, followed by the transfer to a conserved His of the HPt protein and finally the transfer to an Asp in the receiver domain of the RR protein.

The protein resides in the nucleus. Transcriptional activator that binds specific DNA sequence. Functions as a response regulator involved in His-to-Asp phosphorelay signal transduction system. Phosphorylation of the Asp residue in the receiver domain activates the ability of the protein to promote the transcription of target genes. May directly activate some type-A response regulators in response to cytokinins. This is Two-component response regulator ORR28 from Oryza sativa subsp. indica (Rice).